The chain runs to 230 residues: Flagellar L-ring protein (230 aa).

The first 22 residues, 1–22 (MSPISNFARIALACTVAALLGG), serve as a signal peptide directing secretion. Cysteine 23 is lipidated: N-palmitoyl cysteine. Cysteine 23 is lipidated: S-diacylglycerol cysteine.

Belongs to the FlgH family. As to quaternary structure, the basal body constitutes a major portion of the flagellar organelle and consists of four rings (L,P,S, and M) mounted on a central rod.

The protein localises to the cell outer membrane. It localises to the bacterial flagellum basal body. Functionally, assembles around the rod to form the L-ring and probably protects the motor/basal body from shearing forces during rotation. This chain is Flagellar L-ring protein, found in Stenotrophomonas maltophilia (strain K279a).